Here is a 342-residue protein sequence, read N- to C-terminus: Anthranilate phosphoribosyltransferase (342 aa).

5-phospho-alpha-D-ribose 1-diphosphate-binding positions include Gly-79, Gly-82–Asp-83, Thr-87, Asn-89–Thr-92, Lys-107–Ser-115, and Ser-119. Gly-79 is an anthranilate binding site. Ser-91 is a binding site for Mg(2+). Asn-110 contributes to the anthranilate binding site. Arg-165 is a binding site for anthranilate. Mg(2+) is bound by residues Asp-223 and Glu-224.

It belongs to the anthranilate phosphoribosyltransferase family. Homodimer. Requires Mg(2+) as cofactor.

It carries out the reaction N-(5-phospho-beta-D-ribosyl)anthranilate + diphosphate = 5-phospho-alpha-D-ribose 1-diphosphate + anthranilate. The protein operates within amino-acid biosynthesis; L-tryptophan biosynthesis; L-tryptophan from chorismate: step 2/5. Catalyzes the transfer of the phosphoribosyl group of 5-phosphorylribose-1-pyrophosphate (PRPP) to anthranilate to yield N-(5'-phosphoribosyl)-anthranilate (PRA). This is Anthranilate phosphoribosyltransferase from Buchnera aphidicola subsp. Acyrthosiphon pisum (strain Tuc7).